The primary structure comprises 175 residues: Probable DNA replication complex GINS protein PSF2 (175 aa).

Belongs to the GINS2/PSF2 family. As to quaternary structure, component of the GINS complex which is a heterotetramer of SLD5, PSF1, PSF2 and PSF3.

It localises to the nucleus. Functionally, the GINS complex plays an essential role in the initiation of DNA replication. This chain is Probable DNA replication complex GINS protein PSF2, found in Encephalitozoon cuniculi (strain GB-M1) (Microsporidian parasite).